A 582-amino-acid chain; its full sequence is MSLHSDESNWQTFKRLWTYIRLYKAGLVVSTIALVINAAADTYMISLLKPLLDEGFGNAESNFLRILPFMILGLMFVRGLSGFASSYCLSWVSGNVVMQMRRRLFNHFMHMPVRFFDQESTGGLLSRITYDSEQVAGATSRALVSIVREGASIIGLLTLMFWNSWQLSLVLIVVAPVVAFAISFVSKRFRKISRNMQTAMGHVTSSAEQMLKGHKVVLSYGGQEVERKRFDKVSNSMRQQTMKLVSAQSIADPVIQMIASLALFAVLFLASVDSIRAELTPGTFTVVFSAMFGLMRPLKALTSVTSEFQRGMAACQTLFGLMDLETERDNGKYEAERVNGEVDVKDVTFTYQGKEKPALSHVSFSIPQGKTVALVGRSGSGKSTIANLFTRFYDVDSGSICLDGHDVRDYKLTNLRRHFALVSQNVHLFNDTIANNIAYAAEGEYTREQIEQAARQAHAMEFIENMPQGLDTVIGENGTSLSGGQRQRVAIARALLRDAPVLILDEATSALDTESERAIQAALDELQKNKTVLVIAHRLSTIEQADEILVVDEGEIIERGRHADLLAQDGAYAQLHRIQFGE.

The next 6 membrane-spanning stretches (helical) occupy residues 27–48, 63–85, 144–168, 170–188, 244–266, and 283–302; these read LVVSTIALVINAAADTYMISLL, FLRILPFMILGLMFVRGLSGFAS, VSIVREGASIIGLLTLMFWNSWQLS, VLIVVAPVVAFAISFVSKR, LVSAQSIADPVIQMIASLALFAV, and TFTVVFSAMFGLMRPLKALT. The region spanning 28 to 310 is the ABC transmembrane type-1 domain; it reads VVSTIALVIN…LTSVTSEFQR (283 aa). The ABC transporter domain maps to 342-578; sequence VDVKDVTFTY…DGAYAQLHRI (237 aa). 376–383 provides a ligand contact to ATP; it reads GRSGSGKS.

It belongs to the ABC transporter superfamily. Lipid exporter (TC 3.A.1.106) family. In terms of assembly, homodimer.

The protein resides in the cell inner membrane. The enzyme catalyses ATP + H2O + lipid A-core oligosaccharideSide 1 = ADP + phosphate + lipid A-core oligosaccharideSide 2.. Its function is as follows. Involved in lipopolysaccharide (LPS) biosynthesis. Translocates lipid A-core from the inner to the outer leaflet of the inner membrane. Transmembrane domains (TMD) form a pore in the inner membrane and the ATP-binding domain (NBD) is responsible for energy generation. Shows ATPase activity. The sequence is that of ATP-dependent lipid A-core flippase from Vibrio cholerae serotype O1 (strain ATCC 39315 / El Tor Inaba N16961).